The chain runs to 59 residues: Large ribosomal subunit protein bL32 (59 aa).

The tract at residues 1 to 59 (MAVQQNKKSPSKRGMHRSHDFLTNPPLAVEPTSGEIHLRHHVSPNGYYRGRKVLPAKGE) is disordered. Positions 49-59 (RGRKVLPAKGE) are enriched in basic residues.

This sequence belongs to the bacterial ribosomal protein bL32 family.

The sequence is that of Large ribosomal subunit protein bL32 from Methylobacillus flagellatus (strain ATCC 51484 / DSM 6875 / VKM B-1610 / KT).